A 200-amino-acid chain; its full sequence is NAD(P)H dehydrogenase (quinone) (200 aa).

Positions 4-191 (VLVLYYSSYG…DIARYQGKHV (188 aa)) constitute a Flavodoxin-like domain. FMN-binding positions include 10–15 (SSYGHV) and 79–81 (TRF). Tyrosine 12 lines the NAD(+) pocket. Residue tryptophan 99 participates in substrate binding. FMN-binding positions include 114-120 (STGTQHG) and histidine 135.

Belongs to the WrbA family. The cofactor is FMN.

The enzyme catalyses a quinone + NADH + H(+) = a quinol + NAD(+). It carries out the reaction a quinone + NADPH + H(+) = a quinol + NADP(+). The protein is NAD(P)H dehydrogenase (quinone) of Burkholderia orbicola (strain MC0-3).